A 1279-amino-acid polypeptide reads, in one-letter code: Maestro heat-like repeat-containing protein family member 7 (1279 aa).

Residues 1–145 (MALSRGTSLI…NSSRPCSEDV (145 aa)) form a disordered region. A compositionally biased stretch (low complexity) spans 39 to 61 (PDLALAPPPEHALALTPALHPAL). Composition is skewed to polar residues over residues 71–106 (PVSN…NHTS) and 124–140 (PSST…SSRP). N-linked (GlcNAc...) asparagine glycosylation is found at Asn200, Asn210, Asn255, Asn267, and Asn296. Phosphoserine is present on Ser356. N-linked (GlcNAc...) asparagine glycosylation occurs at Asn541. A run of 2 helical transmembrane segments spans residues 548–568 (TLVT…LLLG) and 722–742 (LLPI…ALLM). 4 HEAT repeats span residues 913-950 (QELC…MEQV), 992-1029 (AKVQ…GQGK), 1035-1072 (AVYV…KLQT), and 1080-1117 (EQLT…FMNW).

It is found in the membrane. This is Maestro heat-like repeat-containing protein family member 7 (Mroh7) from Mus musculus (Mouse).